Consider the following 61-residue polypeptide: MRCLPVLIILLLLTASAPGVVVLPKTEDDVPMSSVYGNGKSILRGILRNGVCCGYKLCHPC.

The first 19 residues, methionine 1–glycine 19, serve as a signal peptide directing secretion. A propeptide spanning residues valine 20 to arginine 48 is cleaved from the precursor. 2 disulfide bridges follow: cysteine 52-cysteine 61 and cysteine 53-cysteine 58. Residue proline 60 is modified to 4-hydroxyproline.

This sequence belongs to the conotoxin T superfamily. Expressed by the venom duct.

It localises to the secreted. In terms of biological role, chi-conotoxins inhibit the neuronal noradrenaline transporter (NET/SLC6A2). Activity has been described on both human (inhibition of norepinephrine uptake is IC(50)=1.26 uM) and rat (pIC(50)=6.21 corresponding IC(50)=0.16 uM) transporters. Acts as a reversible non-competitive inhibitor. The chain is Chi-conotoxin MrIA from Conus marmoreus (Marble cone).